The chain runs to 211 residues: Thiamine-phosphate synthase (211 aa).

4-amino-2-methyl-5-(diphosphooxymethyl)pyrimidine is bound by residues 37–41 (QYRDK) and Asn-69. The Mg(2+) site is built by Asp-70 and Asp-89. Ser-108 provides a ligand contact to 4-amino-2-methyl-5-(diphosphooxymethyl)pyrimidine. Residue 135–137 (SPT) participates in 2-[(2R,5Z)-2-carboxy-4-methylthiazol-5(2H)-ylidene]ethyl phosphate binding. Lys-138 is a 4-amino-2-methyl-5-(diphosphooxymethyl)pyrimidine binding site. 2-[(2R,5Z)-2-carboxy-4-methylthiazol-5(2H)-ylidene]ethyl phosphate is bound by residues Gly-165 and 185–186 (LS).

This sequence belongs to the thiamine-phosphate synthase family. Mg(2+) serves as cofactor.

It catalyses the reaction 2-[(2R,5Z)-2-carboxy-4-methylthiazol-5(2H)-ylidene]ethyl phosphate + 4-amino-2-methyl-5-(diphosphooxymethyl)pyrimidine + 2 H(+) = thiamine phosphate + CO2 + diphosphate. It carries out the reaction 2-(2-carboxy-4-methylthiazol-5-yl)ethyl phosphate + 4-amino-2-methyl-5-(diphosphooxymethyl)pyrimidine + 2 H(+) = thiamine phosphate + CO2 + diphosphate. The catalysed reaction is 4-methyl-5-(2-phosphooxyethyl)-thiazole + 4-amino-2-methyl-5-(diphosphooxymethyl)pyrimidine + H(+) = thiamine phosphate + diphosphate. It functions in the pathway cofactor biosynthesis; thiamine diphosphate biosynthesis; thiamine phosphate from 4-amino-2-methyl-5-diphosphomethylpyrimidine and 4-methyl-5-(2-phosphoethyl)-thiazole: step 1/1. Condenses 4-methyl-5-(beta-hydroxyethyl)thiazole monophosphate (THZ-P) and 2-methyl-4-amino-5-hydroxymethyl pyrimidine pyrophosphate (HMP-PP) to form thiamine monophosphate (TMP). This chain is Thiamine-phosphate synthase, found in Thiobacillus denitrificans (strain ATCC 25259 / T1).